The following is an 886-amino-acid chain: MENKNKKCLRTLLLLALFLGLLEDGKTALIAPNSQQIFKLQNQVILQELGRDSSSAETSYTFETDLKINSVWSGDEDQLLEVFISGSKVDASGKARSITRIPDRPFYISLVRGQPDKVIAHTSKDQSLLNLERGIASLLQLRLDASQEEELDVSGLCRVSYNVKSSTKVEKTKRDCSLWDLRVNYNPEEALGVTQQAQETVFYELSSEGTLLHAESQENHRLNLAAKPDVGSFVKSSLILQHVSQGSEEVKQLQLGSLDKAIQSLLEWYRVFELESDVDGMISAIKEQTLEDQLKASLTELQSADVGKSSLALAYVKLIPLARITRQEQFEDLLTEHAEVLPQLVDLLGAVQTFDAHNATFGFLYKESETTSEQLDLLEKYLQSLAVATHPDRKIVEHLFGLLEQESIKKHLKLRESVIQTVATLTRQSGLDVEDPLLKEVRSYLLQGLTSKEPTLYIRALQNLQDPATIEALLEHAQTGEAPNLSVAALQALKAFPLGSFNSSHRLQFESIFYQRKRRFDSSARTLALDIILSLRPTQEQLGNFLDYLASNDRQFEIKTYVLQKLRMLAEKCPRFRALFKSELVKRRHVNNYNVLGQKGLTTVLTRQLSQAPAFNETLLSTQEVYQGILKRGSVEFLLHAGRSQASSFKLGIYTAGLGSLVGDGDSGDGNDAIPADDEFSEDEAVTAGMEISVQGAQLRPLVFFSGQTELMGHVWGGSASDSTPAYQATTLSQDNEHYIILTSGATLHWRVLGARSVDLNGKVGFSLWNRNAQTEIQQNTGSAVLGHLAVGFTYAKLVQDFSITHEPKLSLNADLDFYSGIKLCMQLQRPEQLLKQTNVRSVFLQSVDRPYAKHVRSTLSHKTAGCTFALNQKNNEMCNLIFRDL.

Positions 1–27 (MENKNKKCLRTLLLLALFLGLLEDGKT) are cleaved as a signal peptide. A Vitellogenin domain is found at 30-653 (IAPNSQQIFK…SQASSFKLGI (624 aa)). N-linked (GlcNAc...) asparagine glycosylation is found at asparagine 358, asparagine 484, asparagine 502, and asparagine 616.

The protein localises to the endoplasmic reticulum. It is found in the golgi apparatus. It catalyses the reaction a 1,2-diacyl-sn-glycero-3-phosphocholine(in) = a 1,2-diacyl-sn-glycero-3-phosphocholine(out). The catalysed reaction is a 1,2-diacyl-sn-glycero-3-phosphoethanolamine(in) = a 1,2-diacyl-sn-glycero-3-phosphoethanolamine(out). Its function is as follows. Catalyzes the transport of phospholipids such as phosphatidylethanolamine (1,2-diacyl-sn-glycero-3-phosphoethanolamine) and phosphatidylcholine (1,2-diacyl-sn-glycero-3-phosphocholine) between membranes. Required for the assembly and secretion of plasma lipoproteins that contain apolipoprotein B. This Drosophila melanogaster (Fruit fly) protein is Microsomal triacylglycerol transfer protein.